Reading from the N-terminus, the 788-residue chain is IQ motif and ubiquitin-like domain-containing protein (788 aa).

The tract at residues 1-89 (MSDPEEERVA…SLGSASGSQD (89 aa)) is disordered. Residues 7–20 (ERVADSTAHYEEAG) show a composition bias toward basic and acidic residues. A compositionally biased stretch (acidic residues) spans 31 to 54 (EAEGSDVMPEQDDEVQELTTESEE). The segment covering 68–78 (KSDDSKPREEV) has biased composition (basic and acidic residues). The segment covering 80–89 (SLGSASGSQD) has biased composition (polar residues). Residues 127-203 (ATVKIVLIPA…VQVEVFSTLP (77 aa)) form the Ubiquitin-like domain. Residues 334–363 (RLHAVIVIQTSYRRWHAKRYVESLRKQKKL) form the IQ domain.

Component of the axonemal radial spoke 1 (RS1) complex, at least composed of spoke head proteins RSPH1, RSPH3B, RSPH9 and the cilia-specific component RSPH4A or sperm-specific component RSPH6A, spoke stalk proteins RSPH14, DNAJB13, DYDC1, ROPN1L and NME5, and the anchor protein IQUB. Does not appear to be part of radial spoke complexes 2 or 3 (RS2 or RS3). Interacts with CALM1. Interacts with DNAJB13. Interacts with DYNLL2. Interacts with NME5. Interacts with RSPH3. Interacts with RSPH9. Interacts with ZMYND10. Interacts with calmodulin; the interaction occurs in conditions of low but not high calcium. As to expression, expressed in the flagellum of sperm cells and cilia of tracheal epithelial cells (at protein level). High expression in testis, also present in brain and lung.

Its subcellular location is the cytoplasm. It is found in the cytoskeleton. The protein resides in the flagellum axoneme. It localises to the cell projection. The protein localises to the cilium. In terms of biological role, anchors the radial spoke 1 (RS1) complex to the A microtubule of outer doublet microtubules in axonemes. The triple radial spokes (RS1, RS2 and RS3) are required to modulate beating of the sperm flagellum. May play a role in inhibiting signaling via MAPK1/ERK2 and MAPK3/ERK1. Additionally, may play a role in the functioning of cilia. Not required for the functioning of tracheal or ependymal cilia. The chain is IQ motif and ubiquitin-like domain-containing protein (Iqub) from Mus musculus (Mouse).